The sequence spans 391 residues: 3-ketoacyl-CoA thiolase (391 aa).

The active-site Acyl-thioester intermediate is the Cys-95. Catalysis depends on proton acceptor residues His-347 and Cys-377.

The protein belongs to the thiolase-like superfamily. Thiolase family. As to quaternary structure, heterotetramer of two alpha chains (FadB) and two beta chains (FadA).

The protein resides in the cytoplasm. The catalysed reaction is an acyl-CoA + acetyl-CoA = a 3-oxoacyl-CoA + CoA. It functions in the pathway lipid metabolism; fatty acid beta-oxidation. Catalyzes the final step of fatty acid oxidation in which acetyl-CoA is released and the CoA ester of a fatty acid two carbons shorter is formed. This chain is 3-ketoacyl-CoA thiolase, found in Ectopseudomonas mendocina (strain ymp) (Pseudomonas mendocina).